Reading from the N-terminus, the 207-residue chain is dTTP/UTP pyrophosphatase (207 aa).

Aspartate 80 (proton acceptor) is an active-site residue.

The protein belongs to the Maf family. YhdE subfamily. It depends on a divalent metal cation as a cofactor.

The protein resides in the cytoplasm. It carries out the reaction dTTP + H2O = dTMP + diphosphate + H(+). The catalysed reaction is UTP + H2O = UMP + diphosphate + H(+). Its function is as follows. Nucleoside triphosphate pyrophosphatase that hydrolyzes dTTP and UTP. May have a dual role in cell division arrest and in preventing the incorporation of modified nucleotides into cellular nucleic acids. The protein is dTTP/UTP pyrophosphatase (maf1) of Agrobacterium fabrum (strain C58 / ATCC 33970) (Agrobacterium tumefaciens (strain C58)).